Here is a 343-residue protein sequence, read N- to C-terminus: Flavone 3'-O-methyltransferase OMT2 (343 aa).

Position 107 (Asn107) interacts with (E)-ferulate. S-adenosyl-L-homocysteine is bound by residues Gly184, Asp207, Asp227, Met228, Met240, and Lys241. His245 serves as the catalytic Proton acceptor. (E)-5-hydroxyferulate is bound at residue Asp246. Residues Glu273 and Glu305 contribute to the active site.

This sequence belongs to the class I-like SAM-binding methyltransferase superfamily. Cation-independent O-methyltransferase family. COMT subfamily. In terms of assembly, homodimer.

The enzyme catalyses (E)-5-hydroxyferulate + S-adenosyl-L-methionine = (E)-sinapate + S-adenosyl-L-homocysteine + H(+). The catalysed reaction is luteolin + S-adenosyl-L-methionine = chrysoeriol + S-adenosyl-L-homocysteine + H(+). It catalyses the reaction quercetin + S-adenosyl-L-methionine = isorhamnetin + S-adenosyl-L-homocysteine + H(+). It carries out the reaction (E)-caffeate + S-adenosyl-L-methionine = (E)-ferulate + S-adenosyl-L-homocysteine + H(+). The enzyme catalyses a 3'-hydroxyflavone + S-adenosyl-L-methionine = a 3'-methoxyflavone + S-adenosyl-L-homocysteine + H(+). It functions in the pathway flavonoid metabolism. Functionally, catalyzes the 3'-O-methylation of the flavonoids luteolin and quercetin. Catalyzes the 3- of 5-O-methylation of the phenylpropanoids caffeate and 5-hydroxyferulate. Substrate preference is 5-hydroxyferulate &gt; luteolin &gt; quercetin &gt; caffeate. Apigenin, kempferol and 3,4-dimethylquercetin do not seem to be substrates for methylation. This Chrysosplenium americanum (American golden saxifrage) protein is Flavone 3'-O-methyltransferase OMT2.